The chain runs to 146 residues: MMDINEIREYLPHRYPFLLVDRVVDLDVEGQRIRAYKNVSINEPFFNGHFPQHPIMPGVLIIEAMAQAAGILGFKMLDVKPADGTIYYFVGSDKMRFRQPVIPGDQLILEARFLSAKRSIWKFECQALVDDKQVCSGEIICAERKL.

Residue H49 is part of the active site.

Belongs to the thioester dehydratase family. FabZ subfamily.

The protein localises to the cytoplasm. The enzyme catalyses a (3R)-hydroxyacyl-[ACP] = a (2E)-enoyl-[ACP] + H2O. In terms of biological role, involved in unsaturated fatty acids biosynthesis. Catalyzes the dehydration of short chain beta-hydroxyacyl-ACPs and long chain saturated and unsaturated beta-hydroxyacyl-ACPs. This Azotobacter vinelandii (strain DJ / ATCC BAA-1303) protein is 3-hydroxyacyl-[acyl-carrier-protein] dehydratase FabZ.